Reading from the N-terminus, the 146-residue chain is Protein new-glue 3 (146 aa).

The signal sequence occupies residues 1 to 23; it reads MRYSCVLLLLATVACLLIPQTGG. The segment at 23–146 is disordered; sequence GSTATTTSTS…RRARSARRLS (124 aa). The segment covering 24–66 has biased composition (low complexity); sequence STATTTSTSASATTTTSASATTTTASDTTTTTAATTTTSSSSS. 4 repeat units span residues 31–38, 39–46, 47–53, and 54–61. Residues 31–61 are 4 X 8 AA approximate tandem repeats of T-S-A-S-A-T-T-T; that stretch reads TSASATTTTSASATTTTASDTTTTTAATTTT. Basic residues predominate over residues 67-92; sequence KSKKKKRTYHYTRHVYRPKRIRHIYR. The span at 93-106 shows a compositional bias: basic and acidic residues; it reads HKADDDESSTDRTS. Low complexity predominate over residues 116–132; the sequence is SSSSSSSGSTSSRSGNS. Basic residues predominate over residues 133–146; sequence RIRRRRARSARRLS.

In terms of tissue distribution, salivary gland specific.

The protein localises to the secreted. The sequence is that of Protein new-glue 3 (ng3) from Drosophila melanogaster (Fruit fly).